The sequence spans 274 residues: Putative phosphatase BUsg_029 (274 aa).

Aspartate 8 (nucleophile) is an active-site residue. Residue aspartate 8 coordinates Mg(2+). Leucine 9 provides a ligand contact to phosphate. Residue aspartate 10 participates in Mg(2+) binding. Phosphate is bound by residues serine 42–glycine 43 and lysine 191. Position 214 (aspartate 214) interacts with Mg(2+). Asparagine 217 is a binding site for phosphate.

This sequence belongs to the HAD-like hydrolase superfamily. Cof family. It depends on Mg(2+) as a cofactor.

The protein is Putative phosphatase BUsg_029 of Buchnera aphidicola subsp. Schizaphis graminum (strain Sg).